The primary structure comprises 140 residues: Organic hydroperoxide resistance protein-like (140 aa).

Belongs to the OsmC/Ohr family.

The protein is Organic hydroperoxide resistance protein-like of Staphylococcus aureus (strain bovine RF122 / ET3-1).